The following is a 499-amino-acid chain: Sialic acid-binding Ig-like lectin 8 (499 aa).

Residues 1–16 form the signal peptide; sequence MLLLLLLLPLLWGTKG. Over 17-363 the chain is Extracellular; that stretch reads MEGDRQYGDG…RPVSQVTLAA (347 aa). Residues Tyr-23, 72–75, Arg-125, and 134–138 each bind a carbohydrate; these read RPYQ and SYKSQ. The 84-residue stretch at 40 to 123 folds into the Ig-like V-type domain; the sequence is GLCVHVPCSF…ARKRDKGSYF (84 aa). 3 disulfide bridges follow: Cys-42/Cys-181, Cys-47/Cys-107, and Cys-175/Cys-224. 2 Ig-like C2-type domains span residues 157-240 and 246-344; these read PDIL…STVR and PPWN…LSLS. Asn-172 carries an N-linked (GlcNAc...) asparagine glycan. N-linked (GlcNAc...) asparagine glycosylation is found at Asn-249 and Asn-267. An intrachain disulfide couples Cys-283 to Cys-328. The chain crosses the membrane as a helical span at residues 364–384; the sequence is VGGAGATALAFLSFCIIFIIV. Over 385 to 499 the chain is Cytoplasmic; sequence RSCRKKSARP…HNPSSKEVRG (115 aa). A disordered region spans residues 410–443; the sequence is RGSASQGPLTESWKDGNPLKKPPPAVAPSSGEEG. The short motif at 445–450 is the ITIM motif element; sequence LHYATL. Disordered stretches follow at residues 451–470 and 478–499; these read SFHK…DSEY and RETA…EVRG. Positions 468–473 match the SLAM-like motif motif; the sequence is SEYSEI.

The protein belongs to the immunoglobulin superfamily. SIGLEC (sialic acid binding Ig-like lectin) family. As to expression, expressed specifically on blood cells namely basophil, mast cells and eosinophils.

The protein resides in the membrane. Putative adhesion molecule that mediates sialic-acid dependent binding to blood cells. Preferentially binds to alpha-2,3-linked sialic acid. Also binds to alpha-2,6-linked sialic acid. The sialic acid recognition site may be masked by cis interactions with sialic acids on the same cell surface. Recognizes simultaneously epitopes having a terminal N-acetylneuraminic acid (sialic acid) and an underlying 6-O-sulfated galactose. Preferentially binds to Gal-6-sulfated sialyl-Lewis X glycan epitopes. The polypeptide is Sialic acid-binding Ig-like lectin 8 (SIGLEC8) (Homo sapiens (Human)).